Reading from the N-terminus, the 164-residue chain is SsrA-binding protein (164 aa).

A disordered region spans residues 141 to 164; that stretch reads KLHDKRQDEKQKSIKKEINSALKR. The span at 145 to 158 shows a compositional bias: basic and acidic residues; it reads KRQDEKQKSIKKEI.

It belongs to the SmpB family.

It localises to the cytoplasm. Functionally, required for rescue of stalled ribosomes mediated by trans-translation. Binds to transfer-messenger RNA (tmRNA), required for stable association of tmRNA with ribosomes. tmRNA and SmpB together mimic tRNA shape, replacing the anticodon stem-loop with SmpB. tmRNA is encoded by the ssrA gene; the 2 termini fold to resemble tRNA(Ala) and it encodes a 'tag peptide', a short internal open reading frame. During trans-translation Ala-aminoacylated tmRNA acts like a tRNA, entering the A-site of stalled ribosomes, displacing the stalled mRNA. The ribosome then switches to translate the ORF on the tmRNA; the nascent peptide is terminated with the 'tag peptide' encoded by the tmRNA and targeted for degradation. The ribosome is freed to recommence translation, which seems to be the essential function of trans-translation. The protein is SsrA-binding protein of Prochlorococcus marinus (strain MIT 9301).